The primary structure comprises 119 residues: Phosphoribosyl-AMP cyclohydrolase (119 aa).

Residue aspartate 77 participates in Mg(2+) binding. Cysteine 78 lines the Zn(2+) pocket. The Mg(2+) site is built by aspartate 79 and aspartate 81. Positions 94 and 101 each coordinate Zn(2+).

Belongs to the PRA-CH family. Homodimer. Mg(2+) serves as cofactor. The cofactor is Zn(2+).

The protein localises to the cytoplasm. The enzyme catalyses 1-(5-phospho-beta-D-ribosyl)-5'-AMP + H2O = 1-(5-phospho-beta-D-ribosyl)-5-[(5-phospho-beta-D-ribosylamino)methylideneamino]imidazole-4-carboxamide. It participates in amino-acid biosynthesis; L-histidine biosynthesis; L-histidine from 5-phospho-alpha-D-ribose 1-diphosphate: step 3/9. Functionally, catalyzes the hydrolysis of the adenine ring of phosphoribosyl-AMP. This is Phosphoribosyl-AMP cyclohydrolase from Cereibacter sphaeroides (strain KD131 / KCTC 12085) (Rhodobacter sphaeroides).